The following is a 208-amino-acid chain: Outer-membrane lipoprotein carrier protein (208 aa).

A signal peptide spans 1–21; the sequence is MKRTATLLVVALILALNTAQA.

Belongs to the LolA family. Monomer.

The protein resides in the periplasm. Participates in the translocation of lipoproteins from the inner membrane to the outer membrane. Only forms a complex with a lipoprotein if the residue after the N-terminal Cys is not an aspartate (The Asp acts as a targeting signal to indicate that the lipoprotein should stay in the inner membrane). This Halorhodospira halophila (strain DSM 244 / SL1) (Ectothiorhodospira halophila (strain DSM 244 / SL1)) protein is Outer-membrane lipoprotein carrier protein.